A 141-amino-acid chain; its full sequence is HTH-type transcriptional repressor NsrR (141 aa).

In terms of domain architecture, HTH rrf2-type spans 2–129 (QLTSFTDYGL…DNYTLADLVE (128 aa)). Positions 28-51 (ISEVTDVYGVSRNHMVKIINQLSR) form a DNA-binding region, H-T-H motif. 3 residues coordinate [2Fe-2S] cluster: C91, C96, and C102.

The cofactor is [2Fe-2S] cluster.

Nitric oxide-sensitive repressor of genes involved in protecting the cell against nitrosative stress. May require iron for activity. The protein is HTH-type transcriptional repressor NsrR of Escherichia coli O127:H6 (strain E2348/69 / EPEC).